The following is a 193-amino-acid chain: Ribosome hibernation promotion factor (193 aa).

This sequence belongs to the HPF/YfiA ribosome-associated protein family. Long HPF subfamily. Interacts with 100S ribosomes.

It localises to the cytoplasm. Functionally, might modulate either transcription and/or translation. In terms of biological role, required for dimerization of active 70S ribosomes into 100S ribosomes in stationary phase; 100S ribosomes are translationally inactive and sometimes present during exponential growth. In Picosynechococcus sp. (strain ATCC 27264 / PCC 7002 / PR-6) (Agmenellum quadruplicatum), this protein is Ribosome hibernation promotion factor.